Consider the following 247-residue polypeptide: MSHRDTLFSAPIASLGDWTFDERVAEVFPDMIQRSVPGYSNIISMIGMLAERFVQPNTQVYDLGCSLGAATLSVRRNISHPDCRIIAIDNSPAMVERCRRHIDAYKAPTPVEVIEGDIRDVTIENASLVILNFTIQFLEPGDRQAILNKVYQGLNPGGALVLSEKFSFEDAHVGELLFNMHHDFKRANGYSELEISQKRSMLENVMLTDSVETHKARLRQAGFEHAELWFQCFNFGSLVAVKAGEQA.

S-adenosyl-L-methionine is bound by residues tyrosine 39, 64–66, 89–90, 117–118, asparagine 132, and arginine 199; these read GCS, DN, and DI.

It belongs to the class I-like SAM-binding methyltransferase superfamily. Cx-SAM synthase family. As to quaternary structure, homodimer.

The catalysed reaction is prephenate + S-adenosyl-L-methionine = carboxy-S-adenosyl-L-methionine + 3-phenylpyruvate + H2O. In terms of biological role, catalyzes the conversion of S-adenosyl-L-methionine (SAM) to carboxy-S-adenosyl-L-methionine (Cx-SAM). In Klebsiella pneumoniae subsp. pneumoniae (strain ATCC 700721 / MGH 78578), this protein is Carboxy-S-adenosyl-L-methionine synthase.